A 302-amino-acid polypeptide reads, in one-letter code: MNQTAINRADVRTRFIFDDMPVRGLHVRLENVWQHIVKQKNYPAAIRRALGELLAAGVLLSGNLKNEGTLIVQVQGQGRLKMLVAEATSDRTVRATARWDETAEIADDESLGDLLGEGGVFVLTLQPKDGEPWQGVVPLEGDGIAQMLVNYMKRSEQLDTHIVLSASDEAAGGLLVQRLPEEVLDEEAWEHVSTLARTLTAEELAGLDAQHVLYRLFHETPPRVFEPETFEFSCTCSRGKVSDMLLMLGGEEVGGVVVEQGSIEVDCDFCHSKYVFDETDVNALFGEDVVGVAKGLPRHTVQ.

2 cysteine pairs are disulfide-bonded: C234–C236 and C267–C270.

The protein belongs to the HSP33 family. In terms of processing, under oxidizing conditions two disulfide bonds are formed involving the reactive cysteines. Under reducing conditions zinc is bound to the reactive cysteines and the protein is inactive.

The protein localises to the cytoplasm. Its function is as follows. Redox regulated molecular chaperone. Protects both thermally unfolding and oxidatively damaged proteins from irreversible aggregation. Plays an important role in the bacterial defense system toward oxidative stress. The polypeptide is 33 kDa chaperonin (Neisseria meningitidis serogroup A / serotype 4A (strain DSM 15465 / Z2491)).